The chain runs to 196 residues: RNA-binding protein with multiple splicing (196 aa).

The residue at position 1 (methionine 1) is an N-acetylmethionine. A Phosphothreonine modification is found at threonine 12. In terms of domain architecture, RRM spans 24–101 (RTLFVSGLPL…QTLRLEFAKA (78 aa)). The tract at residues 98-105 (FAKANTKM) is interaction with RNA. A Phosphothreonine modification is found at threonine 113.

In terms of assembly, homodimer; each protein chain binds one RNA molecule via the external surface of the homodimer. Interacts with RNA binding proteins MBNL1, RBFOX2, RBM4 and RBM14; the interaction allows cooperative assembly of stable cell-specific alternative splicing regulatory complexes. Interacts with SMAD2, SMAD3 and SMAD4; the interactions are direct. As to expression, ubiquitously expressed, at various levels depending on the isoform and the tissue. Strongly expressed in the heart, prostate, small intestine, large intestine, and ovary; moderately expressed in the placenta, lung, liver, kidney, pancreas, and testis; and poorly expressed in the skeletal muscle, spleen, thymus and peripheral leukocytes.

It is found in the nucleus. The protein resides in the cytoplasm. Its subcellular location is the stress granule. It localises to the P-body. Its function is as follows. RNA binding protein that mediates the regulation of pre-mRNA alternative splicing (AS). Acts either as activator (FLNB, HSPG2, LIPA1, MYOCD, PTPRF and PPFIBP1) or repressor (TPM1, ACTN1, ITGA7, PIEZO1, LSM14B, MBNL1 and MBML2) of splicing events on specific pre-mRNA targets. Together with RNA binding proteins RBFOX2 and MBNL1/2, activates a splicing program associated with differentiated contractile vascular smooth muscle cells (SMC) by regulating AS of numerous pre-mRNA involved in actin cytoskeleton and focal adhesion machineries, suggesting a role in promoting a cell differentiated state. Binds to introns, exons and 3'-UTR associated with tandem CAC trinucleotide motifs separated by a variable spacer region, at a minimum as a dimer. The minimal length of RNA required for RBPMS-binding tandem CAC motifs is 15 nt, with spacing ranging from 1 to 9 nt. Can also bind to CA dinucleotide repeats. Mediates repression of TPM1 exon 3 by binding to CAC tandem repeats in the flanking intronic regions, followed by higher-order oligomerization and heterotypic interactions with other splicing regulators including MBNL1 and RBFOX2, which prevents assembly of ATP-dependent splicing complexes. Functionally, acts as a regulator of pre-mRNA alternative splicing (AS). Binds mRNA. Regulates AS of ACTN1, FLNB, although with lower efficiency than isoform A / RBPMSA. Acts as coactivator of SMAD transcriptional activity in a TGFB1-dependent manner, possibly through increased phosphorylation of SMAD2 and SMAD3 at the C-terminal SSXS regions and promotion of the nuclear accumulation of SMAD proteins. The sequence is that of RNA-binding protein with multiple splicing from Homo sapiens (Human).